We begin with the raw amino-acid sequence, 117 residues long: Immunoglobulin heavy variable 1-69-2 (117 aa).

A signal peptide spans methionine 1–alanine 19. Residues glutamate 20–serine 44 are framework-1. Residues glutamate 20 to threonine 117 enclose the Ig-like domain. Residues cysteine 41 and cysteine 115 are joined by a disulfide bond. Positions glycine 45 to tyrosine 52 are complementarity-determining-1. Positions methionine 53–leucine 69 are framework-2. Positions valine 70–threonine 77 are complementarity-determining-2. The framework-3 stretch occupies residues isoleucine 78 to cysteine 115. A complementarity-determining-3 region spans residues alanine 116 to threonine 117.

Immunoglobulins are composed of two identical heavy chains and two identical light chains; disulfide-linked.

The protein resides in the secreted. The protein localises to the cell membrane. Its function is as follows. V region of the variable domain of immunoglobulin heavy chains that participates in the antigen recognition. Immunoglobulins, also known as antibodies, are membrane-bound or secreted glycoproteins produced by B lymphocytes. In the recognition phase of humoral immunity, the membrane-bound immunoglobulins serve as receptors which, upon binding of a specific antigen, trigger the clonal expansion and differentiation of B lymphocytes into immunoglobulins-secreting plasma cells. Secreted immunoglobulins mediate the effector phase of humoral immunity, which results in the elimination of bound antigens. The antigen binding site is formed by the variable domain of one heavy chain, together with that of its associated light chain. Thus, each immunoglobulin has two antigen binding sites with remarkable affinity for a particular antigen. The variable domains are assembled by a process called V-(D)-J rearrangement and can then be subjected to somatic hypermutations which, after exposure to antigen and selection, allow affinity maturation for a particular antigen. The sequence is that of Immunoglobulin heavy variable 1-69-2 from Homo sapiens (Human).